Reading from the N-terminus, the 87-residue chain is Selenoprotein W (87 aa).

Residues 10 to 13 (CGAU) constitute a cross-link (cysteinyl-selenocysteine (Cys-Sec); redox-active). Sec13 is a non-standard amino acid (selenocysteine). Cys37 carries the post-translational modification S-glutathionyl cysteine.

The protein belongs to the SelWTH family. Selenoprotein W subfamily. Interacts with DPYSL2, PRDX1, YWHAB, YWHAG, HSP70 and HSP90. As to expression, detected in muscle, heart, tongue, brain, lung, spleen, kidney and liver. Highest levels expressed in muscle and heart whereas lowest levels detected in liver (at protein level).

The protein resides in the cytoplasm. Its function is as follows. Plays a role as a glutathione (GSH)-dependent antioxidant. May be involved in a redox-related process. May play a role in the myopathies of selenium deficiency. In Ovis aries (Sheep), this protein is Selenoprotein W.